Reading from the N-terminus, the 635-residue chain is Threonine--tRNA ligase (635 aa).

The 61-residue stretch at 1–61 (MIAITLPDGS…EQNVDLAIVT (61 aa)) folds into the TGS domain. The catalytic stretch occupies residues 242-533 (DHRKLGKLLD…LLENHAGALP (292 aa)). Positions 333, 384, and 510 each coordinate Zn(2+).

This sequence belongs to the class-II aminoacyl-tRNA synthetase family. As to quaternary structure, homodimer. Requires Zn(2+) as cofactor.

It localises to the cytoplasm. The enzyme catalyses tRNA(Thr) + L-threonine + ATP = L-threonyl-tRNA(Thr) + AMP + diphosphate + H(+). Catalyzes the attachment of threonine to tRNA(Thr) in a two-step reaction: L-threonine is first activated by ATP to form Thr-AMP and then transferred to the acceptor end of tRNA(Thr). Also edits incorrectly charged L-seryl-tRNA(Thr). This is Threonine--tRNA ligase from Ralstonia nicotianae (strain ATCC BAA-1114 / GMI1000) (Ralstonia solanacearum).